A 1035-amino-acid polypeptide reads, in one-letter code: POM121-like protein 2 (1035 aa).

Disordered regions lie at residues 1-37 (MGSF…PLHQ), 177-213 (LFPE…PRPG), 286-343 (IKKE…LGYA), 415-508 (LGPL…QSTL), 754-791 (SPLG…QPAL), and 972-1035 (NTPV…AYKK). Positions 27–37 (TKRRPPQPLHQ) are enriched in basic residues. Residues 309–319 (GGSESSGQQNQ) show a composition bias toward low complexity. Polar residues-rich tracts occupy residues 320–330 (KIPQLPSSPEN), 420–431 (SPQSTGEATSVA), and 445–462 (GCSQ…SKPT). The span at 464 to 481 (TFILLTPTSPTLPVTDTT) shows a compositional bias: low complexity. Pro residues predominate over residues 493-502 (PMPPDPPAPP). Over residues 1000–1016 (RGPFRSSASSFSIGAKS) the composition is skewed to low complexity. The segment covering 1017-1035 (KTPKNREKGHSRRHHAYKK) has biased composition (basic residues).

This sequence belongs to the POM121 family.

This Homo sapiens (Human) protein is POM121-like protein 2 (POM121L2).